The chain runs to 288 residues: Protein CREG2 (288 aa).

A signal peptide spans 1–31 (MSLSGRERPAWPGSRLSWLLCCSALLSPAAG). Residues 78–100 (AHKEDTHLRPRGSARARPAPAAR) form a disordered region. Asn164 carries N-linked (GlcNAc...) asparagine glycosylation.

It belongs to the CREG family. Brain specific.

It is found in the secreted. The protein is Protein CREG2 (Creg2) of Mus musculus (Mouse).